Reading from the N-terminus, the 408-residue chain is Serine/threonine transporter SstT (408 aa).

Helical transmembrane passes span 11–31 (LANG…VSLA), 43–63 (FLGS…VFIL), 82–102 (IVVL…LLSM), 141–161 (ALMT…GLAL), 192–212 (IGIF…AIAG), 216–236 (LLAV…PLIV), 290–310 (IPLG…VLTL), 316–336 (LGIQ…AISA), and 363–383 (VAMQ…AAET).

The protein belongs to the dicarboxylate/amino acid:cation symporter (DAACS) (TC 2.A.23) family.

The protein resides in the cell inner membrane. The enzyme catalyses L-serine(in) + Na(+)(in) = L-serine(out) + Na(+)(out). It carries out the reaction L-threonine(in) + Na(+)(in) = L-threonine(out) + Na(+)(out). In terms of biological role, involved in the import of serine and threonine into the cell, with the concomitant import of sodium (symport system). The polypeptide is Serine/threonine transporter SstT (Shewanella sp. (strain MR-4)).